The sequence spans 583 residues: CTP synthase (583 aa).

The segment at 1–278 (MRRHPQTATK…DAFVVRRLNL (278 aa)) is amidoligase domain. CTP is bound at residue Ser-20. Ser-20 serves as a coordination point for UTP. ATP contacts are provided by residues 21–26 (SLGKGL) and Asp-78. The Mg(2+) site is built by Asp-78 and Glu-152. CTP contacts are provided by residues 159–161 (DIE), 199–204 (KTKPTQ), and Lys-235. UTP contacts are provided by residues 199-204 (KTKPTQ) and Lys-235. The region spanning 303–551 (RIALVGKYVE…VKAAIDYKEG (249 aa)) is the Glutamine amidotransferase type-1 domain. Gly-366 is a binding site for L-glutamine. Catalysis depends on Cys-393, which acts as the Nucleophile; for glutamine hydrolysis. Residues 394-397 (LGLQ), Glu-416, and Arg-477 contribute to the L-glutamine site. Catalysis depends on residues His-524 and Glu-526. Residues 559 to 583 (PERVSNGAERRDQVGQSIPEPANRG) form a disordered region.

This sequence belongs to the CTP synthase family. In terms of assembly, homotetramer.

It carries out the reaction UTP + L-glutamine + ATP + H2O = CTP + L-glutamate + ADP + phosphate + 2 H(+). It catalyses the reaction L-glutamine + H2O = L-glutamate + NH4(+). The enzyme catalyses UTP + NH4(+) + ATP = CTP + ADP + phosphate + 2 H(+). It participates in pyrimidine metabolism; CTP biosynthesis via de novo pathway; CTP from UDP: step 2/2. Allosterically activated by GTP, when glutamine is the substrate; GTP has no effect on the reaction when ammonia is the substrate. The allosteric effector GTP functions by stabilizing the protein conformation that binds the tetrahedral intermediate(s) formed during glutamine hydrolysis. Inhibited by the product CTP, via allosteric rather than competitive inhibition. Its function is as follows. Catalyzes the ATP-dependent amination of UTP to CTP with either L-glutamine or ammonia as the source of nitrogen. Regulates intracellular CTP levels through interactions with the four ribonucleotide triphosphates. This is CTP synthase from Mycobacterium marinum (strain ATCC BAA-535 / M).